The chain runs to 215 residues: Pyridoxine/pyridoxamine 5'-phosphate oxidase (215 aa).

Substrate is bound by residues 9–12 (RRDY) and Lys69. Residues 64–69 (RVLLLK), 79–80 (FT), Lys86, and Gln108 contribute to the FMN site. 3 residues coordinate substrate: Tyr126, Arg130, and Ser134. FMN is bound by residues 143–144 (QS) and Trp188. A substrate-binding site is contributed by 194–196 (RLH). Arg198 provides a ligand contact to FMN.

Belongs to the pyridoxamine 5'-phosphate oxidase family. As to quaternary structure, homodimer. FMN serves as cofactor.

It catalyses the reaction pyridoxamine 5'-phosphate + O2 + H2O = pyridoxal 5'-phosphate + H2O2 + NH4(+). The enzyme catalyses pyridoxine 5'-phosphate + O2 = pyridoxal 5'-phosphate + H2O2. It functions in the pathway cofactor metabolism; pyridoxal 5'-phosphate salvage; pyridoxal 5'-phosphate from pyridoxamine 5'-phosphate: step 1/1. The protein operates within cofactor metabolism; pyridoxal 5'-phosphate salvage; pyridoxal 5'-phosphate from pyridoxine 5'-phosphate: step 1/1. In terms of biological role, catalyzes the oxidation of either pyridoxine 5'-phosphate (PNP) or pyridoxamine 5'-phosphate (PMP) into pyridoxal 5'-phosphate (PLP). The polypeptide is Pyridoxine/pyridoxamine 5'-phosphate oxidase (Pseudomonas putida (strain W619)).